The chain runs to 492 residues: E1B 55 kDa protein (492 aa).

The disordered stretch occupies residues 22 to 112 (ENMEGSQDED…ERNPSGNNSR (91 aa)). The span at 34-44 (RLLASAASGSS) shows a compositional bias: low complexity. Residues serine 486 and serine 487 each carry the phosphoserine modification. Threonine 491 bears the Phosphothreonine mark.

Belongs to the adenoviridae E1B 55 kDa protein family. Interacts with host PML-4 and PML-5; this interaction promotes efficient subnuclear targeting of E1B-55K to PML nuclear bodies. Interacts with E4-ORF3 protein. Interacts with E4-ORF6 protein.

The protein resides in the host nucleus. Its subcellular location is the host cytoplasm. In terms of biological role, plays a major role to prevent cellular inhibition of viral genome replication. Assembles an SCF-like E3 ubiquitin ligase complex based on the cellular proteins ELOB, ELOC, CUL5 and RBX1, in cooperation with viral E4orf6. This viral RING-type ligase ubiquitinates cellular substrates and targets them to proteasomal degradation: TP53/p53, LIG4, MRE11-RAD50-NBS1 (MRN) complex, ITGA3, DAXX and BLM. E1B-55K probably acts as the substrate-specific adapter of the SCF-like E3 ubiquitin ligase complex. Degradation of host TP53/p53 activity is essential for preventing E1A-induced TP53 accumulation that would otherwise lead to cell apoptosis and growth arrest. E1B-55K also inactivates TP53 transcription-factor activity by binding its transactivation domain. E1B-55K also functions as a SUMO1 E3 ligase for TP53 which causes the latter to be sequestered in promyelocytic leukemia (PML) nuclear bodies thereby contributing to maximal inhibition of TP53 function. The polypeptide is E1B 55 kDa protein (Human adenovirus B serotype 7 (HAdV-7)).